A 72-amino-acid chain; its full sequence is Small, acid-soluble spore protein C (72 aa).

Belongs to the alpha/beta-type SASP family.

In terms of biological role, SASP are bound to spore DNA. They are double-stranded DNA-binding proteins that cause DNA to change to an a-like conformation. They protect the DNA backbone from chemical and enzymatic cleavage and are thus involved in dormant spore's high resistance to UV light. In Bacillus subtilis (strain 168), this protein is Small, acid-soluble spore protein C (sspC).